We begin with the raw amino-acid sequence, 331 residues long: Ferredoxin--NADP reductase 2 (331 aa).

Residues E37, Q45, Y50, V90, F124, D286, and T327 each contribute to the FAD site.

It belongs to the ferredoxin--NADP reductase type 2 family. As to quaternary structure, homodimer. FAD serves as cofactor.

It carries out the reaction 2 reduced [2Fe-2S]-[ferredoxin] + NADP(+) + H(+) = 2 oxidized [2Fe-2S]-[ferredoxin] + NADPH. The protein is Ferredoxin--NADP reductase 2 of Listeria monocytogenes serotype 4b (strain F2365).